Here is a 230-residue protein sequence, read N- to C-terminus: MTKTTTCVYHFLVLNWYIFLNYHIPQIGRNEEKLREFHDGGRSKYLTLLNLLLQAIFFGVACLDDVLKRVIGRKDIKFVTSFRDLLFTTMAFPISTFVFLVFWTLFHYDRSLVYPKGLDDFFPAWVNHAMHTSIFPFSLFETILRPHNYPSKKLGLTLLGAFNFAYIIRILWRYVQTGNWVYPVFDSLSPLGIIIFFSAAYILVAGIYLFGEKINHWKWGAIAKPQMKKN.

The Cytoplasmic segment spans residues 1–7; that stretch reads MTKTTTC. Residues 8–28 form a helical membrane-spanning segment; it reads VYHFLVLNWYIFLNYHIPQIG. Topologically, residues 29–45 are extracellular; it reads RNEEKLREFHDGGRSKY. Residues 46–66 form a helical membrane-spanning segment; sequence LTLLNLLLQAIFFGVACLDDV. Over 67 to 85 the chain is Cytoplasmic; sequence LKRVIGRKDIKFVTSFRDL. The helical transmembrane segment at 86–106 threads the bilayer; sequence LFTTMAFPISTFVFLVFWTLF. The Extracellular portion of the chain corresponds to 107–120; sequence HYDRSLVYPKGLDD. The chain crosses the membrane as a helical span at residues 121–141; that stretch reads FFPAWVNHAMHTSIFPFSLFE. The Cytoplasmic portion of the chain corresponds to 142-154; the sequence is TILRPHNYPSKKL. Residues 155-175 form a helical membrane-spanning segment; the sequence is GLTLLGAFNFAYIIRILWRYV. At 176–190 the chain is on the extracellular side; the sequence is QTGNWVYPVFDSLSP. The chain crosses the membrane as a helical span at residues 191 to 211; the sequence is LGIIIFFSAAYILVAGIYLFG. The Cytoplasmic portion of the chain corresponds to 212 to 230; it reads EKINHWKWGAIAKPQMKKN.

Belongs to the AIG1 family.

Its subcellular location is the cell membrane. It carries out the reaction 9-hexadecanoyloxy-octadecanoate + H2O = 9-hydroxy-octadecanoate + hexadecanoate + H(+). It catalyses the reaction 12-hexadecanoyloxy-octadecanoate + H2O = 12-hydroxyoctadecanoate + hexadecanoate + H(+). The enzyme catalyses 9-(9Z-hexadecenoyloxy)-octadecanoate + H2O = (9Z)-hexadecenoate + 9-hydroxy-octadecanoate + H(+). The catalysed reaction is 12-(9Z-hexadecenoyloxy)-octadecanoate + H2O = 12-hydroxyoctadecanoate + (9Z)-hexadecenoate + H(+). It carries out the reaction 13-(9Z-hexadecenoyloxy)-octadecanoate + H2O = 13-hydroxy-octadecanoate + (9Z)-hexadecenoate + H(+). It catalyses the reaction 9-octadecanoyloxy-octadecanoate + H2O = 9-hydroxy-octadecanoate + octadecanoate + H(+). The enzyme catalyses 12-octadecanoyloxy-octadecanoate + H2O = 12-hydroxyoctadecanoate + octadecanoate + H(+). The catalysed reaction is 13-octadecanoyloxy-octadecanoate + H2O = 13-hydroxy-octadecanoate + octadecanoate + H(+). It carries out the reaction 9-(9Z-octadecenoyloxy)-octadecanoate + H2O = 9-hydroxy-octadecanoate + (9Z)-octadecenoate + H(+). It catalyses the reaction 12-(9Z-octadecenoyloxy)-octadecanoate + H2O = 12-hydroxyoctadecanoate + (9Z)-octadecenoate + H(+). The enzyme catalyses 13-(9Z-octadecenoyloxy)-octadecanoate + H2O = 13-hydroxy-octadecanoate + (9Z)-octadecenoate + H(+). The catalysed reaction is 5-(9Z-octadecenoyloxy)-octadecanoate + H2O = 5-hydroxy-octadecanoate + (9Z)-octadecenoate + H(+). Functionally, hydrolyzes bioactive fatty-acid esters of hydroxy-fatty acids (FAHFAs), but not other major classes of lipids. Shows a preference for FAHFAs with branching distal from the carboxylate head group of the lipids. Regulates the expression and the cell-associated anticoagulant activity of the inhibitor TFPI in endothelial cells (in vitro). The polypeptide is Androgen-dependent TFPI-regulating protein (Adtrp) (Mus musculus (Mouse)).